Consider the following 632-residue polypeptide: Phosphatidylinositol 3,4,5-trisphosphate 3-phosphatase and protein-tyrosine-phosphatase PTEN2B (632 aa).

The segment covering 1-12 (METDPANSSSKS) has biased composition (polar residues). The disordered stretch occupies residues 1 to 98 (METDPANSSS…RESPPSIFSS (98 aa)). Basic and acidic residues predominate over residues 39 to 48 (SAEREAHEDS). Over residues 63–73 (MPASSTGSEPL) the composition is skewed to polar residues. The segment covering 87–98 (SPRESPPSIFSS) has biased composition (low complexity). A Phosphatase tensin-type domain is found at 189–368 (RRYQEGEFDL…KYYERVQNQF (180 aa)). Cys307 (phosphocysteine intermediate) is an active-site residue. A C2 tensin-type domain is found at 375–502 (ERRCMLRGFR…FHVEIVMIEP (128 aa)). Residues 504–603 (NSQPTKSKSD…SGHYNPIPNN (100 aa)) form a disordered region. Residues 505–527 (SQPTKSKSDSTQQQSQSSSSADS) show a composition bias toward low complexity. The segment covering 535–549 (KDDDVFSDSDGEEEG) has biased composition (acidic residues). Ser541 bears the Phosphoserine mark. Polar residues predominate over residues 550-571 (NSQSYSTNEKTASSMHTTSKPH). Residues 584 to 594 (ANRSVTSSSSS) show a composition bias toward low complexity.

The protein belongs to the PTEN phosphatase protein family. In terms of tissue distribution, expressed, at low levels, in seedlings, roots, stems, leaves, flowers and siliques. However, at protein level, not observed in older leaves, flowers and siliques.

It carries out the reaction O-phospho-L-tyrosyl-[protein] + H2O = L-tyrosyl-[protein] + phosphate. The catalysed reaction is a 1,2-diacyl-sn-glycero-3-phospho-(1D-myo-inositol-3,4,5-trisphosphate) + H2O = a 1,2-diacyl-sn-glycero-3-phospho-(1D-myo-inositol-4,5-bisphosphate) + phosphate. Protein tyrosine phosphatase that also exhibits a weak lipid phosphatase activity towards PtdIns(3)P. The sequence is that of Phosphatidylinositol 3,4,5-trisphosphate 3-phosphatase and protein-tyrosine-phosphatase PTEN2B from Arabidopsis thaliana (Mouse-ear cress).